Here is a 337-residue protein sequence, read N- to C-terminus: tRNA N6-adenosine threonylcarbamoyltransferase (337 aa).

2 residues coordinate Fe cation: H111 and H115. Substrate is bound by residues 134–138, D167, G180, and N272; that span reads LVSGG. D300 contacts Fe cation.

Belongs to the KAE1 / TsaD family. The cofactor is Fe(2+).

The protein resides in the cytoplasm. The catalysed reaction is L-threonylcarbamoyladenylate + adenosine(37) in tRNA = N(6)-L-threonylcarbamoyladenosine(37) in tRNA + AMP + H(+). Its function is as follows. Required for the formation of a threonylcarbamoyl group on adenosine at position 37 (t(6)A37) in tRNAs that read codons beginning with adenine. Is involved in the transfer of the threonylcarbamoyl moiety of threonylcarbamoyl-AMP (TC-AMP) to the N6 group of A37, together with TsaE and TsaB. TsaD likely plays a direct catalytic role in this reaction. The chain is tRNA N6-adenosine threonylcarbamoyltransferase from Escherichia coli O139:H28 (strain E24377A / ETEC).